We begin with the raw amino-acid sequence, 131 residues long: MNKQINIRKIQEKIKKIREKKIKFLRYDWDKFYRIGRQETWRKPKGIDNPVRLELKGYQPKVKIGFRSPREIRGLHPSGLIPFYVNNKKDLEKASQMKDKVIVVFSSTIGLKKKLELVEEAKKMGLKIANG.

The protein belongs to the eukaryotic ribosomal protein eL32 family.

The protein is Large ribosomal subunit protein eL32 (rpl32e) of Sulfurisphaera tokodaii (strain DSM 16993 / JCM 10545 / NBRC 100140 / 7) (Sulfolobus tokodaii).